The following is a 597-amino-acid chain: Hydrogenase-1 large chain (597 aa).

Ni(2+) is bound by residues Cys76, Cys79, Cys576, and Cys579.

This sequence belongs to the [NiFe]/[NiFeSe] hydrogenase large subunit family. In terms of assembly, heterodimer of a large and a small subunit. The cofactor is Ni(2+).

The protein localises to the cell membrane. The enzyme catalyses H2 + A = AH2. Functionally, this is one of three E.coli hydrogenases synthesized in response to different physiological conditions. HYD1 is believed to have a role in hydrogen cycling during fermentative growth. The chain is Hydrogenase-1 large chain (hyaB) from Escherichia coli (strain K12).